The primary structure comprises 696 residues: Elongation factor G (696 aa).

A tr-type G domain is found at 8–282 (KDYRNIGIMA…AVVDYLPSPL (275 aa)). GTP contacts are provided by residues 17-24 (AHIDAGKT), 81-85 (DTPGH), and 135-138 (NKMD).

Belongs to the TRAFAC class translation factor GTPase superfamily. Classic translation factor GTPase family. EF-G/EF-2 subfamily.

The protein localises to the cytoplasm. Functionally, catalyzes the GTP-dependent ribosomal translocation step during translation elongation. During this step, the ribosome changes from the pre-translocational (PRE) to the post-translocational (POST) state as the newly formed A-site-bound peptidyl-tRNA and P-site-bound deacylated tRNA move to the P and E sites, respectively. Catalyzes the coordinated movement of the two tRNA molecules, the mRNA and conformational changes in the ribosome. The sequence is that of Elongation factor G from Mycoplasmopsis synoviae (strain 53) (Mycoplasma synoviae).